The following is a 452-amino-acid chain: tRNA pseudouridine synthase Pus10 (452 aa).

The region spanning 71-200 (EMLRALAPSC…DGHVEIQIQP (130 aa)) is the THUMP domain. Catalysis depends on Asp-269, which acts as the Nucleophile. 2 residues coordinate substrate: Tyr-335 and Tyr-406.

It belongs to the pseudouridine synthase Pus10 family.

The enzyme catalyses uridine(54) in tRNA = pseudouridine(54) in tRNA. The catalysed reaction is uridine(55) in tRNA = pseudouridine(55) in tRNA. Functionally, responsible for synthesis of pseudouridine from uracil-54 and uracil-55 in the psi GC loop of transfer RNAs. In Methanothrix thermoacetophila (strain DSM 6194 / JCM 14653 / NBRC 101360 / PT) (Methanosaeta thermophila), this protein is tRNA pseudouridine synthase Pus10.